Consider the following 99-residue polypeptide: Acylphosphatase (99 aa).

Residues 5–97 (VRQIVIRGRV…RPGERFSQLP (93 aa)) enclose the Acylphosphatase-like domain. Residues arginine 20 and asparagine 38 contribute to the active site.

Belongs to the acylphosphatase family.

It catalyses the reaction an acyl phosphate + H2O = a carboxylate + phosphate + H(+). In Nitrobacter hamburgensis (strain DSM 10229 / NCIMB 13809 / X14), this protein is Acylphosphatase (acyP).